A 473-amino-acid chain; its full sequence is Kremen protein 1 (473 aa).

Residues 1-19 (MAPPAARLALLSAAALTLA) form the signal peptide. Residues 21–392 (RPAPGPRSGP…ANSHRVEGWT (372 aa)) lie on the Extracellular side of the membrane. The Kringle domain maps to 31–114 (ECFTANGADY…YWKYCEIPAC (84 aa)). Cystine bridges form between cysteine 32-cysteine 114, cysteine 55-cysteine 95, cysteine 84-cysteine 109, cysteine 122-cysteine 186, cysteine 147-cysteine 167, cysteine 151-cysteine 169, cysteine 190-cysteine 198, and cysteine 214-cysteine 240. N-linked (GlcNAc...) asparagine glycosylation is present at asparagine 59. The WSC domain maps to 116–210 (MPGNLGCYKD…DGRIILFDTL (95 aa)). Residues 214–321 (CGGNYSAMAA…QGFAVLYQAT (108 aa)) form the CUB domain. 5 N-linked (GlcNAc...) asparagine glycosylation sites follow: asparagine 217, asparagine 255, asparagine 293, asparagine 333, and asparagine 345. A helical transmembrane segment spans residues 393 to 413 (VYGLATLLILTVTAVVAKILL). The Cytoplasmic segment spans residues 414–473 (HVTFKSHRVPASGDLRDCRQPGASGDIWTIFYEPSTTISIFKKKLKGQSQQDDRNPLVSD). The segment at 414 to 473 (HVTFKSHRVPASGDLRDCRQPGASGDIWTIFYEPSTTISIFKKKLKGQSQQDDRNPLVSD) is essential for apoptotic activity.

As to quaternary structure, forms a ternary complex with DKK1 and LRP6. Interacts with LRP6 in a DKK1-dependent manner. Interacts with DKK1 and RSPO1 (via FU repeats). In terms of tissue distribution, in the adult, widely expressed with high levels in heart, lung, kidney, skeletal muscle and testis.

It localises to the cell membrane. Its function is as follows. Receptor for Dickkopf proteins. Cooperates with DKK1/2 to inhibit Wnt/beta-catenin signaling by promoting the endocytosis of Wnt receptors LRP5 and LRP6. In the absence of DKK1, potentiates Wnt-beta-catenin signaling by maintaining LRP5 or LRP6 at the cell membrane. Can trigger apoptosis in a Wnt-independent manner and this apoptotic activity is inhibited upon binding of the ligand DKK1. Plays a role in limb development; attenuates Wnt signaling in the developing limb to allow normal limb patterning and can also negatively regulate bone formation. Modulates cell fate decisions in the developing cochlea with an inhibitory role in hair cell fate specification. This chain is Kremen protein 1 (Kremen1), found in Mus musculus (Mouse).